We begin with the raw amino-acid sequence, 1211 residues long: A disintegrin and metalloproteinase with thrombospondin motifs 2 (1211 aa).

An N-terminal signal peptide occupies residues 1–29; the sequence is MDPPAGAARRLLCPALLLLLLLLPPPLLP. A propeptide spanning residues 30–253 is cleaved from the precursor; the sequence is PPPPPANARL…GVLEEHANSS (224 aa). Residues N112 and N251 are each glycosylated (N-linked (GlcNAc...) asparagine). Residues 266–470 form the Peptidase M12B domain; the sequence is YNIEVLLGVD…HSYDCLLDDP (205 aa). Disulfide bonds link C343–C392, C386–C465, C425–C451, C492–C517, C503–C526, C512–C545, C539–C550, C573–C610, C577–C615, and C588–C600. H408 lines the Zn(2+) pocket. E409 is an active-site residue. Residues H412 and H418 each contribute to the Zn(2+) site. One can recognise a Disintegrin domain in the interval 480–560; sequence QLPGLHYSMN…IWLTPDILKR (81 aa). The TSP type-1 1 domain maps to 561-616; that stretch reads DGSWGAWSPFGSCSRTCGTGVKFRTRQCDNPHPANGGRTCSGLAYDFQLCSRQDCP. The Cell attachment site motif lies at 691 to 693; that stretch reads RGD. The segment at 723–851 is spacer; it reads KVVKGTFTRS…NVDDNNVLEE (129 aa). 3 consecutive TSP type-1 domains span residues 854–912, 914–971, and 975–1029; these read VVYE…NPQE, SQPV…RACS, and CPGR…GPCP. 2 N-linked (GlcNAc...) asparagine glycosylation sites follow: N949 and N993. Cystine bridges form between C987-C1023, C991-C1028, and C1002-C1012. N1031 carries an N-linked (GlcNAc...) asparagine glycan. In terms of domain architecture, PLAC spans 1059-1097; the sequence is SKGHCQGDKSIFCRMEVLSRYCSIPGYNKLCCKSCNLYN. 3 N-linked (GlcNAc...) asparagine glycosylation sites follow: N1098, N1145, and N1150. The segment at 1170 to 1191 is disordered; it reads LEDEVQPPNLIPRRPSPYEKTR.

As to quaternary structure, may belong to a multimeric complex. Binds specifically to collagen type XIV. It depends on Zn(2+) as a cofactor. Post-translationally, the precursor is cleaved by a furin endopeptidase. In terms of processing, glycosylated. Can be O-fucosylated by POFUT2 on a serine or a threonine residue found within the consensus sequence C1-X(2)-(S/T)-C2-G of the TSP type-1 repeat domains where C1 and C2 are the first and second cysteine residue of the repeat, respectively. Fucosylated repeats can then be further glycosylated by the addition of a beta-1,3-glucose residue by the glucosyltransferase, B3GALTL. Fucosylation mediates the efficient secretion of ADAMTS family members. Can also be C-glycosylated with one or two mannose molecules on tryptophan residues within the consensus sequence W-X-X-W of the TPRs, and N-glycosylated. These other glycosylations can also facilitate secretion. In terms of tissue distribution, expressed at high level in skin, bone, tendon and aorta and at low levels in thymus and brain.

Its subcellular location is the secreted. It is found in the extracellular space. The protein resides in the extracellular matrix. The catalysed reaction is Cleaves the N-propeptide of collagen chain alpha1(I) at Pro-|-Gln and of alpha1(II) and alpha2(I) at Ala-|-Gln.. Its function is as follows. Cleaves the propeptides of type I and II collagen prior to fibril assembly. Does not act on type III collagen. Cleaves lysyl oxidase LOX at a site downstream of its propeptide cleavage site to produce a short LOX form with reduced collagen-binding activity. This Homo sapiens (Human) protein is A disintegrin and metalloproteinase with thrombospondin motifs 2 (ADAMTS2).